The sequence spans 247 residues: EGF-like domain-containing protein C02B10.3 (247 aa).

A signal peptide spans 1-17 (MTGALCIVLFGVTMVTA). The Extracellular segment spans residues 18–220 (ERPKIKDTHG…LCDKRCQKGH (203 aa)). EGF-like domains follow at residues 114 to 150 (FGTS…RFCE) and 180 to 213 (SGAS…DLCD). 4 cysteine pairs are disulfide-bonded: Cys-123/Cys-138, Cys-140/Cys-149, Cys-190/Cys-201, and Cys-203/Cys-212. A glycan (N-linked (GlcNAc...) asparagine) is linked at Asn-126. Residues 221–240 (VTCSTCSSFIPAALFAIILL) traverse the membrane as a helical segment. At 241–247 (CVNKFNY) the chain is on the cytoplasmic side.

Its subcellular location is the membrane. The protein is EGF-like domain-containing protein C02B10.3 of Caenorhabditis elegans.